A 2602-amino-acid chain; its full sequence is MPVTEKDLAEDAPWKKIQQNTFTRWCNEHLKCVNKRIGNLQTDLSDGLRLIALLEVLSQKRMYRKYHQRPTFRQMQLENVSVALEFLDRESIKLVSIDSKAIVDGNLKLILGLVWTLILHYSISMPVWEDEGDDDAKKQTPKQRLLGWIQNKIPYLPITNFNQNWQDGKALGALVDSCAPGLCPDWESWDPQKPVDNAREAMQQADDWLGVPQVITPEEIIHPDVDEHSVMTYLSQFPKAKLKPGAPLKPKLNPKKARAYGRGIEPTGNMVKQPAKFTVDTISAGQGDVMVFVEDPEGNKEEAQVTPDSDKNKTYSVEYLPKVTGLHKVTVLFAGQHISKSPFEVSVDKAQGDASKVTAKGPGLEAVGNIANKPTYFDIYTAGAGVGDIGVEVEDPQGKNTVELLVEDKGNQVYRCVYKPMQPGPHVVKIFFAGDTIPKSPFVVQVGEACNPNACRASGRGLQPKGVRIRETTDFKVDTKAAGSGELGVTMKGPKGLEELVKQKDFLDGVYAFEYYPSTPGRYSIAITWGGHHIPKSPFEVQVGPEAGMQKVRAWGPGLHGGIVGRSADFVVESIGSEVGSLGFAIEGPSQAKIEYNDQNDGSCDVKYWPKEPGEYAVHIMCDDEDIKDSPYMAFIHPATGGYNPDLVRAYGPGLEKSGCIVNNLAEFTVDPKDAGKAPLKIFAQDGEGQRIDIQMKNRMDGTYACSYTPVKAIKHTIAVVWGGVNIPHSPYRVNIGQGSHPQKVKVFGPGVERSGLKANEPTHFTVDCTEAGEGDVSVGIKCDARVLSEDEEDVDFDIIHNANDTFTVKYVPPAAGRYTIKVLFASQEIPASPFRVKVDPSHDASKVKAEGPGLSKAGVENGKPTHFTVYTKGAGKAPLNVQFNSPLPGDAVKDLDIIDNYDYSHTVKYTPTQQGNMQVLVTYGGDPIPKSPFTVGVAAPLDLSKIKLNGLENRVEVGKDQEFTVDTRGAGGQGKLDVTILSPSRKVVPCLVTPVTGRENSTAKFIPREEGLYAVDVTYDGHPVPGSPYTVEASLPPDPSKVKAHGPGLEGGLVGKPAEFTIDTKGAGTGGLGLTVEGPCEAKIECSDNGDGTCSVSYLPTKPGEYFVNILFEEVHIPGSPFKADIEMPFDPSKVVASGPGLEHGKVGEAGLLSVDCSEAGPGALGLEAVSDSGTKAEVSIQNNKDGTYAVTYVPLTAGMYTLTMKYGGELVPHFPARVKVEPAVDTSRIKVFGPGIEGKDVFREATTDFTVDSRPLTQVGGDHIKAHIANPSGASTECFVTDNADGTYQVEYTPFEKGLHVVEVTYDDVPIPNSPFKVAVTEGCQPSRVQAQGPGLKEAFTNKPNVFTVVTRGAGIGGLGITVEGPSESKINCRDNKDGSCSAEYIPFAPGDYDVNITYGGAHIPGSPFRVPVKDVVDPSKVKIAGPGLGSGVRARVLQSFTVDSSKAGLAPLEVRVLGPRGLVEPVNVVDNGDGTHTVTYTPSQEGPYMVSVKYADEEIPRSPFKVKVLPTYDASKVTASGPGLSSYGVPASLPVDFAIDARDAGEGLLAVQITDQEGKPKRAIVHDNKDGTYAVTYIPDKTGRYMIGVTYGGDDIPLSPYRIRATQTGDASKCLATGPGIASTVKTGEEVGFVVDAKTAGKGKVTCTVLTPDGTEAEADVIENEDGTYDIFYTAAKPGTYVIYVRFGGVDIPNSPFTVMATDGEVTAVEEAPVNACPPGFRPWVTEEAYVPVSDMNGLGFKPFDLVIPFAVRKGEITGEVHMPSGKTATPEIVDNKDGTVTVRYAPTEVGLHEMHIKYMGSHIPESPLQFYVNYPNSGSVSAYGPGLVYGVANKTATFTIVTEDAGEGGLDLAIEGPSKAEISCIDNKDGTCTVTYLPTLPGDYSILVKYNDKHIPGSPFTAKITDDSRRCSQVKLGSAADFLLDISETDLSSLTASIKAPSGRDEPCLLKRLPNNHIGISFIPREVGEHLVSIKKNGNHVANSPVSIMVVQSEIGDARRAKVYGRGLSEGRTFEMSDFIVDTRDAGYGGISLAVEGPSKVDIQTEDLEDGTCKVSYFPTVPGVYIVSTKFADEHVPGSPFTVKISGEGRVKESITRTSRAPSVATVGSICDLNLKIPEINSSDMSAHVTSPSGRVTEAEIVPMGKNSHCVRFVPQEMGVHTVSVKYRGQHVTGSPFQFTVGPLGEGGAHKVRAGGPGLERGEAGVPAEFSIWTREAGAGGLSIAVEGPSKAEITFDDHKNGSCGVSYIAQEPGNYEVSIKFNDEHIPESPYLVPVIAPSDDARRLTVMSLQESGLKVNQPASFAIRLNGAKGKIDAKVHSPSGAVEECHVSELEPDKYAVRFIPHENGVHTIDVKFNGSHVVGSPFKVRVGEPGQAGNPALVSAYGTGLEGGTTGIQSEFFINTTRAGPGTLSVTIEGPSKVKMDCQETPEGYKVMYTPMAPGNYLISVKYGGPNHIVGSPFKAKVTGQRLVSPGSANETSSILVESVTRSSTETCYSAIPKASSDASKVTSKGAGLSKAFVGQKSSFLVDCSKAGSNMLLIGVHGPTTPCEEVSMKHVGNQQYNVTYVVKERGDYVLAVKWGEEHIPGSPFHVTVP.

Residues 1 to 239 are actin-binding; sequence MPVTEKDLAE…VMTYLSQFPK (239 aa). Calponin-homology (CH) domains are found at residues 16-122 and 139-242; these read KIQQ…LHYS and QTPK…KAKL. At Thr-216 the chain carries Phosphothreonine. Residues 244–267 are disordered; sequence PGAPLKPKLNPKKARAYGRGIEPT. Filamin repeat units lie at residues 249–347, 349–446, 447–543, 544–636, 640–736, 737–839, 840–938, 939–1034, 1035–1127, 1128–1222, 1223–1322, 1323–1415, 1416–1511, 1512–1608, and 1609–1704; these read KPKL…EVSV, KAQG…VVQV, GEAC…EVQV, GPEA…MAFI, TGGY…RVNI, GQGS…RVKV, DPSH…TVGV, AAPL…TVEA, SLPP…KADI, EMPF…RVKV, EPAV…KVAV, TEGC…RVPV, KDVV…KVKV, LPTY…RIRA, and TQTG…TVMA. At Thr-519 the chain carries Phosphothreonine. Lys-681 is subject to N6-acetyllysine. Ser-730 carries the phosphoserine modification. A phosphoserine mark is found at Ser-886, Ser-932, Ser-983, and Ser-1028. Residues 1128–1511 are interaction with FBLP1; that stretch reads EMPFDPSKVV…IPRSPFKVKV (384 aa). Thr-1307 carries the post-translational modification Phosphothreonine. Residue Ser-1316 is modified to Phosphoserine. 4 positions are modified to phosphoserine: Ser-1433, Asn-1474, Ser-1505, and Ser-1602. The tract at residues 1705 to 1728 is hinge 1; sequence TDGEVTAVEEAPVNACPPGFRPWV. Filamin repeat units lie at residues 1729-1813, 1816-1908, 1919-1994, 1997-2089, 2091-2185, 2188-2280, 2282-2375, and 2379-2471; these read TEEA…SPLQ, VNYP…TAKI, KLGS…SIMV, SEIG…TVKI, GEGR…QFTV, LGEG…LVPV, APSD…KVRV, and GQAG…KAKV. Lys-1780 is subject to N6-acetyllysine. An interaction with the cytoplasmic tail of GP1BA region spans residues 1862–2148; sequence SKAEISCIDN…RVTEAEIVPM (287 aa). An interaction with FLNA 1 region spans residues 2060 to 2225; sequence SYFPTVPGVY…IWTREAGAGG (166 aa). Residues Ser-2083, Ser-2107, and Ser-2113 each carry the phosphoserine modification. Residues 2130 to 2602 are interaction with INPPL1; the sequence is SAHVTSPSGR…PGSPFHVTVP (473 aa). Phosphoserine occurs at positions 2369 and 2465. Lys-2468 is covalently cross-linked (Glycyl lysine isopeptide (Lys-Gly) (interchain with G-Cter in ISG15)). Residues 2472–2506 are hinge 2; it reads TGQRLVSPGSANETSSILVESVTRSSTETCYSAIP. The self-association site, tail stretch occupies residues 2472–2602; it reads TGQRLVSPGS…PGSPFHVTVP (131 aa). Ser-2478, Ser-2481, and Ser-2492 each carry phosphoserine. Residues 2507-2601 form a Filamin 24 repeat; that stretch reads KASSDASKVT…IPGSPFHVTV (95 aa). Residues 2507 to 2602 are interaction with FLNA 2; the sequence is KASSDASKVT…PGSPFHVTVP (96 aa). Lys-2518 and Lys-2524 each carry N6-succinyllysine. Lys-2576 carries the N6-acetyllysine modification.

It belongs to the filamin family. In terms of assembly, homodimer. Interacts with MICALL2. Interacts with RFLNA and RFLNB. Isoform 1 interacts with FBLP1, FLNA, FLNC, GP1BA, INPPL1, ITGB1A, PSEN1 and PSEN2. Isoform 3 interacts with ITGB1A, ITGB1D, ITGB3 and ITGB6. Interacts with MYOT and MYOZ1. Interacts with HBV capsid protein. Interacts with ASB2 isoform 1; the interaction targets FLNB for proteasomal degradation. Post-translationally, ISGylation prevents ability to interact with the upstream activators of the JNK cascade and inhibits IFNA-induced JNK signaling. Ubiquitination by a SCF-like complex containing ASB2 isoform 1 leads to proteasomal degradation which promotes muscle differentiation. In terms of tissue distribution, ubiquitous. Isoform 1 and isoform 2 are expressed in placenta, bone marrow, brain, umbilical vein endothelial cells (HUVEC), retina and skeletal muscle. Isoform 1 is predominantly expressed in prostate, uterus, liver, thyroid, stomach, lymph node, small intestine, spleen, skeletal muscle, kidney, placenta, pancreas, heart, lung, platelets, endothelial cells, megakaryocytic and erythroleukemic cell lines. Isoform 2 is predominantly expressed in spinal cord, platelet and Daudi cells. Also expressed in thyroid adenoma, neurofibrillary tangles (NFT), senile plaques in the hippocampus and cerebral cortex in Alzheimer disease (AD). Isoform 3 and isoform 6 are expressed predominantly in lung, heart, skeletal muscle, testis, spleen, thymus and leukocytes. Isoform 4 and isoform 5 are expressed in heart.

The protein resides in the cytoplasm. Its subcellular location is the cell cortex. It is found in the cytoskeleton. The protein localises to the stress fiber. It localises to the myofibril. The protein resides in the sarcomere. Its subcellular location is the z line. Connects cell membrane constituents to the actin cytoskeleton. May promote orthogonal branching of actin filaments and links actin filaments to membrane glycoproteins. Anchors various transmembrane proteins to the actin cytoskeleton. Interaction with FLNA may allow neuroblast migration from the ventricular zone into the cortical plate. Various interactions and localizations of isoforms affect myotube morphology and myogenesis. Isoform 6 accelerates muscle differentiation in vitro. In Homo sapiens (Human), this protein is Filamin-B (FLNB).